A 241-amino-acid chain; its full sequence is 1-(5-phosphoribosyl)-5-[(5-phosphoribosylamino)methylideneamino] imidazole-4-carboxamide isomerase (241 aa).

Residue Asp-8 is the Proton acceptor of the active site. Asp-130 (proton donor) is an active-site residue.

It belongs to the HisA/HisF family.

The protein resides in the cytoplasm. The enzyme catalyses 1-(5-phospho-beta-D-ribosyl)-5-[(5-phospho-beta-D-ribosylamino)methylideneamino]imidazole-4-carboxamide = 5-[(5-phospho-1-deoxy-D-ribulos-1-ylimino)methylamino]-1-(5-phospho-beta-D-ribosyl)imidazole-4-carboxamide. It functions in the pathway amino-acid biosynthesis; L-histidine biosynthesis; L-histidine from 5-phospho-alpha-D-ribose 1-diphosphate: step 4/9. The protein is 1-(5-phosphoribosyl)-5-[(5-phosphoribosylamino)methylideneamino] imidazole-4-carboxamide isomerase of Leptospira borgpetersenii serovar Hardjo-bovis (strain JB197).